The primary structure comprises 580 residues: tRNA-guanine(15) transglycosylase (580 aa).

The active-site Nucleophile is D91. Substrate is bound by residues D126 and A192. Residues C275, C277, and C280 each contribute to the Zn(2+) site. Residues R504–E579 enclose the PUA domain.

This sequence belongs to the archaeosine tRNA-ribosyltransferase family. Requires Zn(2+) as cofactor.

It carries out the reaction guanosine(15) in tRNA + 7-cyano-7-deazaguanine = 7-cyano-7-carbaguanosine(15) in tRNA + guanine. Its pathway is tRNA modification; archaeosine-tRNA biosynthesis. In terms of biological role, exchanges the guanine residue with 7-cyano-7-deazaguanine (preQ0) at position 15 in the dihydrouridine loop (D-loop) of archaeal tRNAs. This chain is tRNA-guanine(15) transglycosylase, found in Thermococcus onnurineus (strain NA1).